The primary structure comprises 578 residues: SWR1 complex bromodomain subunit bdf1 (578 aa).

The span at 1 to 18 shows a compositional bias: basic and acidic residues; sequence MSSESRENEVKAETKDEI. 3 disordered regions span residues 1-89, 192-254, and 504-578; these read MSSE…PPPQ, DAEQ…RKNN, and ADSS…SESA. Residues 22 to 36 show a composition bias toward polar residues; it reads GSPQLNGDNNIQSSD. 2 stretches are compositionally biased toward basic and acidic residues: residues 37–52 and 60–77; these read GHNDENEESLSRKRDS and LKQEEKESMPKKEPEPTV. In terms of domain architecture, Bromo 1 spans 84 to 190; the sequence is GMPPPQQKYC…EVFERQLKQL (107 aa). Residues 219 to 242 show a composition bias toward low complexity; the sequence is NSSVSSTSASVAASTAPKAASPAV. Phosphoserine occurs at positions 221, 223, and 224. Position 225 is a phosphothreonine (T225). S226 and S239 each carry phosphoserine. The Bromo 2 domain maps to 251–360; that stretch reads RKNNSQMRFC…NVFKEKWEAR (110 aa). The NET domain occupies 430-510; sequence RRDLTKEYGP…KPDADSSEPA (81 aa). S511 is subject to Phosphoserine. Residues 526 to 537 show a composition bias toward basic and acidic residues; that stretch reads VLSETEQAEKIR. Positions 550–563 are enriched in polar residues; it reads TSPTSPESNNAANV. A compositionally biased stretch (acidic residues) spans 566-578; the sequence is SESDNESESSESA.

This sequence belongs to the BET family. In terms of assembly, component of the SWR1 chromatin-remodeling complex.

It is found in the nucleus. Its function is as follows. Component of the SWR1 complex which mediates the ATP-dependent exchange of histone H2A for the H2A variant HZT1 leading to transcriptional regulation of selected genes by chromatin remodeling. The protein is SWR1 complex bromodomain subunit bdf1 (bdf1) of Schizosaccharomyces pombe (strain 972 / ATCC 24843) (Fission yeast).